A 118-amino-acid chain; its full sequence is NADH-ubiquinone oxidoreductase chain 3 (118 aa).

The next 3 membrane-spanning stretches (helical) occupy residues 5 to 25 (YIYI…LIFL), 62 to 82 (LIAI…PWSI), and 87 to 107 (GSFF…VGFI).

This sequence belongs to the complex I subunit 3 family.

The protein localises to the mitochondrion membrane. It catalyses the reaction a ubiquinone + NADH + 5 H(+)(in) = a ubiquinol + NAD(+) + 4 H(+)(out). In terms of biological role, core subunit of the mitochondrial membrane respiratory chain NADH dehydrogenase (Complex I) that is believed to belong to the minimal assembly required for catalysis. Complex I functions in the transfer of electrons from NADH to the respiratory chain. The immediate electron acceptor for the enzyme is believed to be ubiquinone. This Acanthamoeba castellanii (Amoeba) protein is NADH-ubiquinone oxidoreductase chain 3 (ND3).